A 395-amino-acid polypeptide reads, in one-letter code: Testis-expressed protein 44 (395 aa).

Disordered stretches follow at residues 1 to 32, 46 to 100, 133 to 215, and 235 to 258; these read MALP…PLTA, WQDI…LQVS, KMSQ…SDES, and FPPP…GRRP. Over residues 53-65 the composition is skewed to polar residues; that stretch reads SFKTATPRAISTS. A compositionally biased stretch (low complexity) spans 87-98; it reads PLLPSQNPSPLQ. Residues 192-207 show a composition bias toward basic and acidic residues; the sequence is SAEEKAEHPKAPHPEA. At S333 the chain carries Phosphoserine.

Testis. Detected in germ cells at all stages of the seminiferous epithelium, strong expression in elongating spermatids (at protein level).

The protein localises to the cytoplasm. The polypeptide is Testis-expressed protein 44 (Homo sapiens (Human)).